A 347-amino-acid polypeptide reads, in one-letter code: NADH-ubiquinone oxidoreductase chain 2 (347 aa).

The next 10 membrane-spanning stretches (helical) occupy residues Ile-13–Leu-33, Ala-55–Leu-75, Leu-96–Pro-116, Pro-123–Tyr-143, Leu-149–Gly-169, Ile-178–Pro-198, Thr-201–Leu-221, Thr-247–Ile-267, Asn-274–Leu-294, and Leu-326–Ile-346.

Belongs to the complex I subunit 2 family. In terms of assembly, core subunit of respiratory chain NADH dehydrogenase (Complex I) which is composed of 45 different subunits. Interacts with TMEM242.

It is found in the mitochondrion inner membrane. The catalysed reaction is a ubiquinone + NADH + 5 H(+)(in) = a ubiquinol + NAD(+) + 4 H(+)(out). In terms of biological role, core subunit of the mitochondrial membrane respiratory chain NADH dehydrogenase (Complex I) which catalyzes electron transfer from NADH through the respiratory chain, using ubiquinone as an electron acceptor. Essential for the catalytic activity and assembly of complex I. This is NADH-ubiquinone oxidoreductase chain 2 from Pan paniscus (Pygmy chimpanzee).